A 244-amino-acid polypeptide reads, in one-letter code: Tetraspanin-7 (244 aa).

The Cytoplasmic segment spans residues 1–11; the sequence is METKPVITCLK. The chain crosses the membrane as a helical span at residues 12-35; sequence TLLIIYSFVFWITGVILLAVGVWG. The Extracellular portion of the chain corresponds to 36-51; that stretch reads KLTLGTYISLIAENST. Residue asparagine 49 is glycosylated (N-linked (GlcNAc...) asparagine). Residues 52 to 70 traverse the membrane as a helical segment; the sequence is NAPYVLIGTGTTIVVFGLF. At 71–81 the chain is on the cytoplasmic side; that stretch reads GCFATCRGSPW. Residues 82–107 form a helical membrane-spanning segment; the sequence is MLKLYAMFLSLVFLAELVAGISGFVF. Residues 108–208 are Extracellular-facing; that stretch reads RHEIKDTFLR…LVTSFMETNM (101 aa). N-linked (GlcNAc...) asparagine glycans are attached at residues asparagine 150, asparagine 153, asparagine 172, and asparagine 183. The helical transmembrane segment at 209-229 threads the bilayer; sequence GIIAGVAFGIAFSQLIGMLLA. Residues 230–244 lie on the Cytoplasmic side of the membrane; sequence CCLSRFITANQYEMV.

It belongs to the tetraspanin (TM4SF) family.

The protein localises to the membrane. Its function is as follows. May be involved in cell proliferation and cell motility. The polypeptide is Tetraspanin-7 (TSPAN7) (Pan troglodytes (Chimpanzee)).